A 203-amino-acid polypeptide reads, in one-letter code: Probable nicotinate-nucleotide adenylyltransferase (203 aa).

The protein belongs to the NadD family.

It carries out the reaction nicotinate beta-D-ribonucleotide + ATP + H(+) = deamido-NAD(+) + diphosphate. It functions in the pathway cofactor biosynthesis; NAD(+) biosynthesis; deamido-NAD(+) from nicotinate D-ribonucleotide: step 1/1. Catalyzes the reversible adenylation of nicotinate mononucleotide (NaMN) to nicotinic acid adenine dinucleotide (NaAD). In Clostridium kluyveri (strain ATCC 8527 / DSM 555 / NBRC 12016 / NCIMB 10680 / K1), this protein is Probable nicotinate-nucleotide adenylyltransferase.